The sequence spans 528 residues: GMP synthase [glutamine-hydrolyzing] (528 aa).

The 197-residue stretch at 3–199 (KVAIIDFGSQ…FLDIAGCQKD (197 aa)) folds into the Glutamine amidotransferase type-1 domain. C83 functions as the Nucleophile in the catalytic mechanism. Residues H174 and E176 contribute to the active site. The 195-residue stretch at 200-394 (WTVTSFIDDQ…LGISTEILMR (195 aa)) folds into the GMPS ATP-PPase domain. 227–233 (SGGVDSS) serves as a coordination point for ATP.

Homodimer.

The catalysed reaction is XMP + L-glutamine + ATP + H2O = GMP + L-glutamate + AMP + diphosphate + 2 H(+). Its pathway is purine metabolism; GMP biosynthesis; GMP from XMP (L-Gln route): step 1/1. Functionally, catalyzes the synthesis of GMP from XMP. This chain is GMP synthase [glutamine-hydrolyzing], found in Ehrlichia ruminantium (strain Gardel).